Consider the following 638-residue polypeptide: MNLEKLSKPELLTLFSILEGELEARDLVIEALKAQHRDTFIEERYGKYNISDPLMALQRDFETLKEKNDSEKQPVCTNPLSVLKAVMKQCKNMQERMLSQLAAAESRHRKVILDLEEERQRHAQDTAEGDDVTYMLEKERERLTQQLEFEKSQVKKFEKEQKKLSSQLEEERTRHKQLSSMLVLECRKATSKAAEEGQKAGELSLKLDKEKSRASKLEEELAAERKRGLQTEAQVEKQLSEFDIEREQLRAKLNREENRTRALKEEVESLKKLVKDLEAAQQHRSTSEQGREPVTMSRGTATEPPMRVSAFCQTESVQTERSHGSVITKLTDTGLPGPTTAAYSYAKANGHCDPEIQTTRELTSDSSTENQGPPREKSAVAAQEKPVENGGCPVGTETPVTMPSHLPSSGSSLSPSSTASSSLTSSPCSSPVLTKRLLGSAASSPGYQSSYQVGINQRFHAARHKFQSQADQDQQASGLQSPPSRDLSPTLLDNSAAKQLARNTVTQVLSRFTNQGPIKPVSPNSSPFGTDYRNLASTASPRGDTSHSPTPGKVSSPLSPLSPGIKSPTIPRAERGNPPPIPPKKPGLTPSQSATTPVTKTHSQASSLAATEDLASSCSPSAVVANGKDVEILLPTSS.

A coiled-coil region spans residues 87-284 (MKQCKNMQER…KDLEAAQQHR (198 aa)). Disordered stretches follow at residues 280–303 (AQQHRSTSEQGREPVTMSRGTATE), 360–430 (RELT…PCSS), 463–490 (RHKFQSQADQDQQASGLQSPPSRDLSPT), and 514–621 (NQGP…CSPS). Ser-285 is subject to Phosphoserine. The segment covering 360 to 371 (RELTSDSSTENQ) has biased composition (polar residues). 2 stretches are compositionally biased toward low complexity: residues 401–430 (TMPSHLPSSGSSLSPSSTASSSLTSSPCSS) and 467–477 (QSQADQDQQAS). A phosphoserine mark is found at Ser-481, Ser-488, Ser-522, Ser-526, Ser-559, Ser-562, and Ser-567. Polar residues predominate over residues 514 to 528 (NQGPIKPVSPNSSPF). 2 positions are modified to phosphothreonine: Thr-569 and Thr-589. Residues 589 to 620 (TPSQSATTPVTKTHSQASSLAATEDLASSCSP) show a composition bias toward polar residues. Ser-591 is modified (phosphoserine).

Interacts with CTTN/cortactin; this interaction may redistribute CTTN to stress fibers. May form homomers. Associates with the core of STRIPAK complexes composed of PP2A catalytic and scaffolding subunits, the striatins (PP2A regulatory subunits), the striatin-associated proteins MOB4, STRIP1 and STRIP2, PDCD10 and members of the STE20 kinases, such as STK24 and STK26. In terms of tissue distribution, predominantly expressed in skin, also detectable in spleen and lung (at protein level). Very low levels, if any, in brain (at protein level).

The protein resides in the cell projection. The protein localises to the lamellipodium. It localises to the cytoplasm. It is found in the cytoskeleton. Its subcellular location is the stress fiber. Its function is as follows. Regulates lamellipodial actin dynamics in a CTTN-dependent manner. Associates with core striatin-interacting phosphatase and kinase (STRIPAK) complex to form CTTNBP2NL-STRIPAK complexes. STRIPAK complexes have critical roles in protein (de)phosphorylation and are regulators of multiple signaling pathways including Hippo, MAPK, nuclear receptor and cytoskeleton remodeling. Different types of STRIPAK complexes are involved in a variety of biological processes such as cell growth, differentiation, apoptosis, metabolism and immune regulation. The polypeptide is CTTNBP2 N-terminal-like protein (Cttnbp2nl) (Mus musculus (Mouse)).